Here is a 344-residue protein sequence, read N- to C-terminus: Probable dual-specificity RNA methyltransferase RlmN (344 aa).

The active-site Proton acceptor is the Glu89. In terms of domain architecture, Radical SAM core spans Thr95–Asp329. A disulfide bridge links Cys102 with Cys334. 3 residues coordinate [4Fe-4S] cluster: Cys109, Cys113, and Cys116. S-adenosyl-L-methionine contacts are provided by residues Gly156–Glu157, Ser186, Ser215–His217, and Asn291. Cys334 (S-methylcysteine intermediate) is an active-site residue.

The protein belongs to the radical SAM superfamily. RlmN family. It depends on [4Fe-4S] cluster as a cofactor.

It is found in the cytoplasm. It carries out the reaction adenosine(2503) in 23S rRNA + 2 reduced [2Fe-2S]-[ferredoxin] + 2 S-adenosyl-L-methionine = 2-methyladenosine(2503) in 23S rRNA + 5'-deoxyadenosine + L-methionine + 2 oxidized [2Fe-2S]-[ferredoxin] + S-adenosyl-L-homocysteine. It catalyses the reaction adenosine(37) in tRNA + 2 reduced [2Fe-2S]-[ferredoxin] + 2 S-adenosyl-L-methionine = 2-methyladenosine(37) in tRNA + 5'-deoxyadenosine + L-methionine + 2 oxidized [2Fe-2S]-[ferredoxin] + S-adenosyl-L-homocysteine. Specifically methylates position 2 of adenine 2503 in 23S rRNA and position 2 of adenine 37 in tRNAs. The sequence is that of Probable dual-specificity RNA methyltransferase RlmN from Parasynechococcus marenigrum (strain WH8102).